Reading from the N-terminus, the 85-residue chain is Ice-structuring protein 4 (85 aa).

The first 21 residues, 1 to 21 (MRITEANPDPDAKAVPAAAAP), serve as a signal peptide directing secretion.

The protein belongs to the type-I AFP family.

The protein localises to the secreted. Functionally, contributes to protect fish blood from freezing at subzero sea water temperatures. Lowers the blood freezing point. Binds to nascent ice crystals and prevents further growth. The protein is Ice-structuring protein 4 of Pseudopleuronectes americanus (Winter flounder).